Reading from the N-terminus, the 246-residue chain is Breast cancer metastasis-suppressor 1 (246 aa).

The interval M1–R57 is disordered. Acidic residues-rich tracts occupy residues E11–E32 and E40–D52. The stretch at E51–A98 forms a coiled coil. Residues K184 and K242 each participate in a glycyl lysine isopeptide (Lys-Gly) (interchain with G-Cter in SUMO2) cross-link.

The protein belongs to the BRMS1 family. Homohexamer (Potential). Interacts with SNX6, HDAC1 and RELA. Interacts with ARID4A. Identified in mSin3A corepressor complexes together with SIN3A, SIN3B, RBBP4, RBBP7, SAP30, SUDS3, ARID4A, HDAC1 and HDAC2. Interacts with SPOP; this recruits the protein to a ubiquitin ligase complex containing SPOP and CUL3. Ubiquitinated by a cullin-RING-based BCR (BTB-CUL3-RBX1) E3 ubiquitin-protein ligase complex containing SPOP, leading to proteasomal degradation. In terms of tissue distribution, expression levels are higher in term placentas than in early placentas. Low levels of expression observed in normal pregnancies and in molar pregnancies.

It is found in the nucleus. The protein resides in the cytoplasm. Transcriptional repressor. Down-regulates transcription activation by NF-kappa-B by promoting the deacetylation of RELA at 'Lys-310'. Promotes HDAC1 binding to promoter regions. Down-regulates expression of anti-apoptotic genes that are controlled by NF-kappa-B. Promotes apoptosis in cells that have inadequate adherence to a substrate, a process called anoikis, and may thereby inhibit metastasis. May be a mediator of metastasis suppression in breast carcinoma. The chain is Breast cancer metastasis-suppressor 1 (BRMS1) from Homo sapiens (Human).